The primary structure comprises 437 residues: Glutamyl-tRNA reductase (437 aa).

Substrate-binding positions include 46 to 49 (TCNR), serine 97, 102 to 104 (EEQ), and glutamine 108. The active-site Nucleophile is the cysteine 47. Residue 177-182 (GAGEMG) coordinates NADP(+). Residues 410-437 (NGRVSEGKDAKVEEGKPEVDVQRSKAES) form a disordered region. Residues 414 to 437 (SEGKDAKVEEGKPEVDVQRSKAES) show a composition bias toward basic and acidic residues.

It belongs to the glutamyl-tRNA reductase family. As to quaternary structure, homodimer.

It carries out the reaction (S)-4-amino-5-oxopentanoate + tRNA(Glu) + NADP(+) = L-glutamyl-tRNA(Glu) + NADPH + H(+). It participates in porphyrin-containing compound metabolism; protoporphyrin-IX biosynthesis; 5-aminolevulinate from L-glutamyl-tRNA(Glu): step 1/2. Catalyzes the NADPH-dependent reduction of glutamyl-tRNA(Glu) to glutamate 1-semialdehyde (GSA). The chain is Glutamyl-tRNA reductase from Archaeoglobus fulgidus (strain ATCC 49558 / DSM 4304 / JCM 9628 / NBRC 100126 / VC-16).